The chain runs to 335 residues: Nucleoid-associated protein YejK (335 aa).

This sequence belongs to the YejK family.

It is found in the cytoplasm. Its subcellular location is the nucleoid. The chain is Nucleoid-associated protein YejK from Shigella boydii serotype 18 (strain CDC 3083-94 / BS512).